Consider the following 170-residue polypeptide: Thioredoxin-like protein YneN (170 aa).

The helical transmembrane segment at 5 to 23 threads the bilayer; sequence WLAGILLIMLVGYTGWNLY. One can recognise a Thioredoxin domain in the interval 33–170; the sequence is IQEGQQAPDF…KEMEQKLDLD (138 aa). Cys71 and Cys74 form a disulfide bridge.

This sequence belongs to the thioredoxin family.

It localises to the cell membrane. This chain is Thioredoxin-like protein YneN (yneN), found in Bacillus subtilis (strain 168).